The following is a 505-amino-acid chain: Histidine ammonia-lyase (505 aa).

The 5-imidazolinone (Ala-Gly) cross-link spans Ala144 to Gly146. At Ser145 the chain carries 2,3-didehydroalanine (Ser).

This sequence belongs to the PAL/histidase family. In terms of processing, contains an active site 4-methylidene-imidazol-5-one (MIO), which is formed autocatalytically by cyclization and dehydration of residues Ala-Ser-Gly.

It is found in the cytoplasm. The catalysed reaction is L-histidine = trans-urocanate + NH4(+). It participates in amino-acid degradation; L-histidine degradation into L-glutamate; N-formimidoyl-L-glutamate from L-histidine: step 1/3. In Legionella pneumophila (strain Corby), this protein is Histidine ammonia-lyase.